A 1985-amino-acid polypeptide reads, in one-letter code: Voltage-dependent L-type calcium channel subunit alpha-1F (1985 aa).

The span at 1–11 (MSESEVGKDTT) shows a compositional bias: basic and acidic residues. The segment at 1–56 (MSESEVGKDTTPEPSPANGTGPGPEWGLCPGPPTVGTDTSGASGLGTPRRRTQHNK) is disordered. At 1–92 (MSESEVGKDT…RSCISIVEWK (92 aa)) the chain is on the cytoplasmic side. One copy of the I repeat lies at 79–375 (NPIRRSCISI…LVLGVLSGEF (297 aa)). Residues 93–111 (PFDILILLTIFANCVALGV) form a helical membrane-spanning segment. Over 112-129 (YIPFPEDDSNTANHNLEQ) the chain is Extracellular. Residues 130–149 (VEYVFLVIFTVETVLKIVAY) form a helical membrane-spanning segment. Residues 150–161 (GLVLHPSAYIRN) are Cytoplasmic-facing. Residues 162–180 (GWNLLDFIIVVVGLFSVLL) form a helical membrane-spanning segment. The Extracellular segment spans residues 181 to 201 (EQGPGRPGDAPHTGGKPGGFD). Residues 202–220 (VKALRAFRVLRPLRLVSGV) form a helical membrane-spanning segment. The Cytoplasmic portion of the chain corresponds to 221–239 (PSLHIVVNSIMKALVPLLH). A helical transmembrane segment spans residues 240–259 (IALLVLFVIIIYAIIGLELF). At 260-347 (LGRMHKTCYF…WMQDAMGYEL (88 aa)) the chain is on the extracellular side. Asparagine 295 is a glycosylation site (N-linked (GlcNAc...) asparagine). A Ca(2+)-binding site is contributed by glutamate 330. A helical transmembrane segment spans residues 348-372 (PWVYFVSLVIFGSFFVLNLVLGVLS). Residues 373-529 (GEFSKEREKA…ARCRRAVKSN (157 aa)) are Cytoplasmic-facing. The tract at residues 395–412 (QQMEEDLRGYLDWITQAE) is binding to the beta subunit. A compositionally biased stretch (low complexity) spans 455–469 (SHSTRSTHSTSSHAS). Positions 455-490 (SHSTRSTHSTSSHASLPASDTGSMTDTPGDEDEEEG) are disordered. The II repeat unit spans residues 515 to 761 (NRGLRARCRR…VFLAIAVDNL (247 aa)). Residues 530–549 (ACYWAVLLLVFLNTLTIASE) traverse the membrane as a helical segment. Residues 550-564 (HHGQPLWLTQTQEYA) lie on the Extracellular side of the membrane. A helical membrane pass occupies residues 565 to 583 (NKVLLCLFTVEMLLKLYGL). The Cytoplasmic segment spans residues 584–591 (GPSVYVAS). The chain crosses the membrane as a helical span at residues 592–610 (FFNRFDCFVVCGGILETTL). The Extracellular portion of the chain corresponds to 611-620 (VEVGAMQPLG). Residues 621–639 (ISVLRCVRLLRIFKVTRHW) form a helical membrane-spanning segment. The Cytoplasmic portion of the chain corresponds to 640–658 (ASLSNLVASLLNSMKSIAS). The helical transmembrane segment at 659–679 (LLLLLFLFIIIFSLLGMQLFG) threads the bilayer. Topologically, residues 680–733 (GKFNFDQTHTKRSTFDTFPQALLTVFQILTGEDWNVVMYDGIMAYGGPFFPGML) are extracellular. Glutamate 711 provides a ligand contact to Ca(2+). Residues 734 to 758 (VCVYFIILFICGNYILLNVFLAIAV) traverse the membrane as a helical segment. Residues 759–876 (DNLASGDAGT…KACHTLIHHH (118 aa)) lie on the Cytoplasmic side of the membrane. The interval 766–834 (AGTAKDKGRE…EEEEENGAGH (69 aa)) is disordered. A compositionally biased stretch (basic and acidic residues) spans 768 to 787 (TAKDKGREKSSEGNPPKENK). Positions 810 to 830 (MEEEEEEEEEEEEEEEEEEEN) are enriched in acidic residues. Residues 858-1140 (CLSQTNPLRK…FFMMNIFVGF (283 aa)) form an III repeat. A helical transmembrane segment spans residues 877–895 (IFTSLILVFIILSSVSLAA). Residues 896-911 (EDPIRAHSFRNHILGY) are Extracellular-facing. Residues 912–931 (FDYAFTSIFTVEILLKMTVF) form a helical membrane-spanning segment. At 932-943 (GAFLHRGSFCRS) the chain is on the cytoplasmic side. A helical transmembrane segment spans residues 944–962 (WFNLLDLLVVSVSLISFGI). The Extracellular portion of the chain corresponds to 963 to 968 (HSSAIS). A helical transmembrane segment spans residues 969–988 (VVKILRVLRVLRPLRAINRA). Residues 989-1007 (KGLKHVVQCVFVAIRTIGN) lie on the Cytoplasmic side of the membrane. A helical membrane pass occupies residues 1008 to 1027 (IMIVTTLLQFMFACIGVQLF). Residues 1028-1117 (KGKFYSCTDE…EGPIYNYHVE (90 aa)) are Extracellular-facing. Positions 1065–1155 (RLWVNSDFNF…RAQGEQEYQN (91 aa)) are dihydropyridine binding. Glutamate 1091 is a binding site for Ca(2+). A helical membrane pass occupies residues 1118–1138 (ISVFFIVYIIIIAFFMMNIFV). Residues 1139–1195 (GFVIITFRAQGEQEYQNCELDKNQRQCVEYALKAQPLRRYIPKNPHQYRVWATVNSR) are Cytoplasmic-facing. The IV repeat unit spans residues 1182 to 1449 (NPHQYRVWAT…LFVAVIMDNF (268 aa)). The helical transmembrane segment at 1196–1214 (AFEYLMFLLILLNTVALAM) threads the bilayer. The Extracellular portion of the chain corresponds to 1215-1229 (QHYEQTAPFNYAMDI). The chain crosses the membrane as a helical span at residues 1230-1249 (LNMVFTGLFTIEMVLKIIAF). Over 1250–1256 (KPKHYFA) the chain is Cytoplasmic. A helical transmembrane segment spans residues 1257–1278 (DAWNTFDALIVVGSVVDIAVTE). The Extracellular portion of the chain corresponds to 1279–1295 (VNNGGHLGESSEDTSRI). Residues 1296 to 1315 (SITFFRLFRVMRLVKLLSKG) form a helical membrane-spanning segment. Residues 1316–1334 (EGIRTLLWTFIKSFQALPY) are Cytoplasmic-facing. The chain crosses the membrane as a helical span at residues 1335–1354 (VALLIAMIFFIYAVIGMQMF). Over 1355 to 1421 (GLVALQDGTQ…GEEFTCGSSF (67 aa)) the chain is Extracellular. The dihydropyridine binding stretch occupies residues 1402–1468 (RCDPESDFGP…LGPHHLDEFK (67 aa)). The tract at residues 1414-1457 (EFTCGSSFAIVYFISFFMLCAFLIINLFVAVIMDNFDYLTRDWS) is phenylalkylamine binding. The chain crosses the membrane as a helical span at residues 1422-1446 (AIVYFISFFMLCAFLIINLFVAVIM). Over 1447–1982 (DNFDYLTRDW…EDLGDEMACV (536 aa)) the chain is Cytoplasmic. Disordered regions lie at residues 1643-1729 (VTEE…PHRR) and 1746-1778 (LKGT…SFEP). A compositionally biased stretch (acidic residues) spans 1644-1665 (TEEEEEEEEAVGQEAEEEEAEN). 2 stretches are compositionally biased toward polar residues: residues 1675 to 1687 (DSQP…SRIS) and 1713 to 1724 (NSRQPSVIQAGS). The segment covering 1767 to 1776 (DLDRAGRDSF) has biased composition (basic and acidic residues).

It belongs to the calcium channel alpha-1 subunit (TC 1.A.1.11) family. CACNA1F subfamily. As to quaternary structure, voltage-dependent calcium channels are multisubunit complexes, consisting of alpha-1, alpha-2, beta and delta subunits in a 1:1:1:1 ratio. The channel activity is directed by the pore-forming and voltage-sensitive alpha-1 subunit. In many cases, this subunit is sufficient to generate voltage-sensitive calcium channel activity. The auxiliary subunits beta and alpha-2/delta linked by a disulfide bridge regulate the channel activity. Interacts (via IQ domain) with CABP4; in a calcium independent manner. As to expression, expressed in the inner and outer nuclear layers and the genglion cell layer of the retina.

It is found in the membrane. It catalyses the reaction Ca(2+)(in) = Ca(2+)(out). Voltage-sensitive calcium channels (VSCC) mediate the entry of calcium ions into excitable cells and are also involved in a variety of calcium-dependent processes, including muscle contraction, hormone or neurotransmitter release, gene expression, cell motility, cell division and cell death. The isoform alpha-1F gives rise to L-type calcium currents. Long-lasting (L-type) calcium channels belong to the 'high-voltage activated' (HVA) group. They are blocked by dihydropyridines (DHP), phenylalkylamines, and by benzothiazepines. Activates at more negative voltages and does not undergo calcium-dependent inactivation (CDI), due to incoming calcium ions, during depolarization. In Mus musculus (Mouse), this protein is Voltage-dependent L-type calcium channel subunit alpha-1F.